A 366-amino-acid chain; its full sequence is Carbamoyl phosphate synthase small chain (366 aa).

A CPSase region spans residues M1 to D168. The L-glutamine site is built by S45, G220, and G222. Residues R172–E363 enclose the Glutamine amidotransferase type-1 domain. Residue C247 is the Nucleophile of the active site. L248, Q251, N289, G291, and F292 together coordinate L-glutamine. Active-site residues include H336 and E338.

The protein belongs to the CarA family. In terms of assembly, composed of two chains; the small (or glutamine) chain promotes the hydrolysis of glutamine to ammonia, which is used by the large (or ammonia) chain to synthesize carbamoyl phosphate. Tetramer of heterodimers (alpha,beta)4.

The catalysed reaction is hydrogencarbonate + L-glutamine + 2 ATP + H2O = carbamoyl phosphate + L-glutamate + 2 ADP + phosphate + 2 H(+). The enzyme catalyses L-glutamine + H2O = L-glutamate + NH4(+). It functions in the pathway amino-acid biosynthesis; L-arginine biosynthesis; carbamoyl phosphate from bicarbonate: step 1/1. The protein operates within pyrimidine metabolism; UMP biosynthesis via de novo pathway; (S)-dihydroorotate from bicarbonate: step 1/3. In terms of biological role, small subunit of the glutamine-dependent carbamoyl phosphate synthetase (CPSase). CPSase catalyzes the formation of carbamoyl phosphate from the ammonia moiety of glutamine, carbonate, and phosphate donated by ATP, constituting the first step of 2 biosynthetic pathways, one leading to arginine and/or urea and the other to pyrimidine nucleotides. The small subunit (glutamine amidotransferase) binds and cleaves glutamine to supply the large subunit with the substrate ammonia. The sequence is that of Carbamoyl phosphate synthase small chain from Methanococcus maripaludis (strain C5 / ATCC BAA-1333).